A 57-amino-acid polypeptide reads, in one-letter code: Large ribosomal subunit protein bL32 (57 aa).

This sequence belongs to the bacterial ribosomal protein bL32 family.

This is Large ribosomal subunit protein bL32 from Staphylococcus aureus (strain MSSA476).